A 605-amino-acid chain; its full sequence is Elongation factor 4 (605 aa).

In terms of domain architecture, tr-type G spans 9 to 192 (CRIRNFCIIA…SIVHRIPPPA (184 aa)). GTP contacts are provided by residues 21–26 (DHGKST) and 139–142 (NKID).

Belongs to the TRAFAC class translation factor GTPase superfamily. Classic translation factor GTPase family. LepA subfamily.

It is found in the cell inner membrane. The catalysed reaction is GTP + H2O = GDP + phosphate + H(+). Required for accurate and efficient protein synthesis under certain stress conditions. May act as a fidelity factor of the translation reaction, by catalyzing a one-codon backward translocation of tRNAs on improperly translocated ribosomes. Back-translocation proceeds from a post-translocation (POST) complex to a pre-translocation (PRE) complex, thus giving elongation factor G a second chance to translocate the tRNAs correctly. Binds to ribosomes in a GTP-dependent manner. This Chlorobium chlorochromatii (strain CaD3) protein is Elongation factor 4.